Here is a 453-residue protein sequence, read N- to C-terminus: Chromosomal replication initiator protein DnaA (453 aa).

A domain I, interacts with DnaA modulators region spans residues 1–75 (MSENMEELWS…SLKKISGKQL (75 aa)). Positions 75–114 (LKIKFLLPGEKIKMEEQNNENEEKPESTSKKSSQGSEHTT) are domain II. The segment covering 87–103 (KMEEQNNENEEKPESTS) has biased composition (basic and acidic residues). A disordered region spans residues 87 to 112 (KMEEQNNENEEKPESTSKKSSQGSEH). The domain III, AAA+ region stretch occupies residues 115–331 (WLNPKYTFDT…GGLIRVIAYS (217 aa)). ATP-binding residues include Gly-159, Gly-161, Lys-162, and Thr-163. The segment at 332–453 (SMANKKITKE…DEIKNLLHGD (122 aa)) is domain IV, binds dsDNA.

The protein belongs to the DnaA family. In terms of assembly, oligomerizes as a right-handed, spiral filament on DNA at oriC.

It is found in the cytoplasm. Functionally, plays an essential role in the initiation and regulation of chromosomal replication. ATP-DnaA binds to the origin of replication (oriC) to initiate formation of the DNA replication initiation complex once per cell cycle. Binds the DnaA box (a 9 base pair repeat at the origin) and separates the double-stranded (ds)DNA. Forms a right-handed helical filament on oriC DNA; dsDNA binds to the exterior of the filament while single-stranded (ss)DNA is stabiized in the filament's interior. The ATP-DnaA-oriC complex binds and stabilizes one strand of the AT-rich DNA unwinding element (DUE), permitting loading of DNA polymerase. After initiation quickly degrades to an ADP-DnaA complex that is not apt for DNA replication. Binds acidic phospholipids. In Natranaerobius thermophilus (strain ATCC BAA-1301 / DSM 18059 / JW/NM-WN-LF), this protein is Chromosomal replication initiator protein DnaA.